A 389-amino-acid chain; its full sequence is Alanine racemase TOXG (389 aa).

Lys-235 carries the post-translational modification N6-(pyridoxal phosphate)lysine.

Belongs to the threonine aldolase family. Pyridoxal 5'-phosphate serves as cofactor.

The catalysed reaction is L-alanine = D-alanine. Its pathway is mycotoxin biosynthesis; HC-toxin biosynthesis. Alanine racemase, part of the diffuse TOX2 gene cluster that mediates the biosynthesis of the HC-toxin, cyclic tetrapeptide of structure cyclo(D-Pro-L-Ala-D-Ala-L-Aeo), where Aeo stands for 2-amino-9,10-epoxi-8-oxodecanoic acid. HC-toxin is a determinant of specificity and virulence in the interaction between the producing fungus and its host, maize. TOXG catalyzes the conversion of L-alanine into D-alanine, an essential precursor for the production of the major forms of HC-toxin by the non-ribosomal peptide synthetase HTS1. This is Alanine racemase TOXG from Cochliobolus carbonum (Maize leaf spot fungus).